The primary structure comprises 579 residues: Folliculin (579 aa).

The segment at 32–82 is disordered; it reads GAGSGDGAGRGEPADEEEGGIQMSSRIRAHSPAEGASAESSSPGPKKSDMC. 2 positions are modified to phosphoserine: Ser62 and Ser73. Residues 63-76 are compositionally biased toward low complexity; sequence PAEGASAESSSPGP. The 157-residue stretch at 86-242 folds into the uDENN FLCN/SMCR8-type domain; the sequence is RSLAAGHPGY…RNGNAARSLT (157 aa). A coiled-coil region spans residues 285–309; the sequence is QMEQLAELEEESESWDNSEAEEEEK. Positions 294–308 are enriched in acidic residues; sequence EESESWDNSEAEEEE. Residues 294 to 321 are disordered; the sequence is EESESWDNSEAEEEEKGPALPEGAEGRE. A phosphoserine mark is found at Ser302, Ser406, Ser537, Ser542, and Ser571. The cDENN FLCN/SMCR8-type domain occupies 339-491; that stretch reads QPRKLSVFKS…ILNKMEAALT (153 aa). The 66-residue stretch at 493-558 folds into the dDENN FLCN/SMCR8-type domain; that stretch reads QNLSVDVVDQ…LLKFWMTGLS (66 aa).

This sequence belongs to the folliculin family. Interacts (via C-terminus) with FNIP1 or FNIP2 (via C-terminus). Component of the lysosomal folliculin complex (LFC), composed of FLCN, FNIP1 (or FNIP2), RagA/RRAGA or RagB/RRAGB GDP-bound, RagC/RRAGC or RagD/RRAGD GTP-bound, and Ragulator. Interaction with FNIP1 or FNIP2 mediates indirect interaction with the PRKAA1, PRKAB1 and PRKAG1 subunits of 5'-AMP-activated protein kinase (AMPK). Interacts with HSP90AA1 in the presence of FNIP1. Interacts with HSP70, STUB1, CDC37, AHSA1, CCT2, STIP1, PTGES3 and PPP5C. Interacts with GABARAP; interaction takes place in the presence of FNIP1 and/or FNIP2. Interacts with RILP; the interaction is direct and promotes association between RILP and RAB34. Interacts with KIF3A and KIF3B. Interacts with lactate dehydrogenase LDHA, but not LDHB; the interaction is direct, may preferentially bind LDHA dimers rather than tetramers, and regulates LDHA activity, acting as an uncompetitive inhibitor. In terms of processing, phosphorylation by ULK1 modulates the interaction with GABARAP and is required to regulate autophagy.

The protein resides in the lysosome membrane. The protein localises to the cytoplasm. Its subcellular location is the cytosol. It localises to the cell projection. It is found in the cilium. The protein resides in the cytoskeleton. The protein localises to the microtubule organizing center. Its subcellular location is the centrosome. It localises to the spindle. It is found in the nucleus. Its activity is regulated as follows. GTPase-activating activity is inhibited in the folliculin complex (LFC), which stabilizes the GDP-bound state of RagA/RRAGA (or RagB/RRAGB), because Arg-164 is located far from the RagC/RRAGC or RagD/RRAGD nucleotide pocket. Disassembly of the LFC complex upon amino acid restimulation liberates the GTPase-activating activity. In terms of biological role, multi-functional protein, involved in both the cellular response to amino acid availability and in the regulation of glycolysis. GTPase-activating protein that plays a key role in the cellular response to amino acid availability through regulation of the non-canonical mTORC1 signaling cascade controlling the MiT/TFE factors TFEB and TFE3. Activates mTORC1 by acting as a GTPase-activating protein: specifically stimulates GTP hydrolysis by RagC/RRAGC or RagD/RRAGD, promoting the conversion to the GDP-bound state of RagC/RRAGC or RagD/RRAGD, and thereby activating the kinase activity of mTORC1. The GTPase-activating activity is inhibited during starvation and activated in presence of nutrients. Acts as a key component for non-canonical mTORC1-dependent control of the MiT/TFE factors TFEB and TFE3, while it is not involved in mTORC1-dependent phosphorylation of canonical RPS6KB1/S6K1 and EIF4EBP1/4E-BP1. In low-amino acid conditions, the lysosomal folliculin complex (LFC) is formed on the membrane of lysosomes, which inhibits the GTPase-activating activity of FLCN, inactivates mTORC1 and maximizes nuclear translocation of TFEB and TFE3. Upon amino acid restimulation, RagA/RRAGA (or RagB/RRAGB) nucleotide exchange promotes disassembly of the LFC complex and liberates the GTPase-activating activity of FLCN, leading to activation of mTORC1 and subsequent cytoplasmic retention of TFEB and TFE3. Indirectly acts as a positive regulator of Wnt signaling by promoting mTOR-dependent cytoplasmic retention of MiT/TFE factor TFE3. Required for the exit of hematopoietic stem cell from pluripotency by promoting mTOR-dependent cytoplasmic retention of TFE3, thereby increasing Wnt signaling. Involved in the control of embryonic stem cells differentiation; together with LAMTOR1 it is necessary to recruit and activate RagC/RRAGC and RagD/RRAGD at the lysosomes, and to induce exit of embryonic stem cells from pluripotency via non-canonical, mTOR-independent TFE3 inactivation. Acts as an inhibitor of browning of adipose tissue by regulating mTOR-dependent cytoplasmic retention of TFE3. In response to flow stress, regulates STK11/LKB1 accumulation and mTORC1 activation through primary cilia: may act by recruiting STK11/LKB1 to primary cilia for activation of AMPK resided at basal bodies, causing mTORC1 down-regulation. Together with FNIP1 and/or FNIP2, regulates autophagy: following phosphorylation by ULK1, interacts with GABARAP and promotes autophagy. Required for starvation-induced perinuclear clustering of lysosomes by promoting association of RILP with its effector RAB34. Regulates glycolysis by binding to lactate dehydrogenase LDHA, acting as an uncompetitive inhibitor. The sequence is that of Folliculin from Bos taurus (Bovine).